Here is a 386-residue protein sequence, read N- to C-terminus: MDFDGWLLGRLDAVKRDGLYRTLRTQETALKTKGQKRQTWASNDYLGLSKDERLITAAQTAMSRFGAGSGGSRLTTGNTVWHEKLEHTIADFKQTEAALLFSSGYLANIGVLASLPQKGDVILSDQLNHASIVDGCRLSKAETIVYRHIDMADLEKKLASVQARNRRFIVTDGVFSMDGTIAPLDRIMALAKQYQAFVIADDAHATGVLGENGGGTSDYFGVCPDVVIGTLSKAVGTEGGFAAGSNIFIDFLLNQARTFIFQTALPPSICAASHTAFDIISDMHDTRRELQSSVKMIKTRLADMGFTVRGGDTPIIPVIIGDAKTAVSAAALLEKKGICAPAIRPPAVPEGESRIRLTVTADRSLQDIDELTEAFDSIRKELNINK.

Residue arginine 21 coordinates substrate. Glycine 104–tyrosine 105 contributes to the pyridoxal 5'-phosphate binding site. Residue histidine 129 coordinates substrate. Pyridoxal 5'-phosphate-binding positions include serine 176, aspartate 201–histidine 204, and threonine 230–lysine 233. Lysine 233 carries the post-translational modification N6-(pyridoxal phosphate)lysine.

This sequence belongs to the class-II pyridoxal-phosphate-dependent aminotransferase family. BioF subfamily. As to quaternary structure, homodimer. It depends on pyridoxal 5'-phosphate as a cofactor.

It carries out the reaction 6-carboxyhexanoyl-[ACP] + L-alanine + H(+) = (8S)-8-amino-7-oxononanoate + holo-[ACP] + CO2. Its pathway is cofactor biosynthesis; biotin biosynthesis. In terms of biological role, catalyzes the decarboxylative condensation of pimeloyl-[acyl-carrier protein] and L-alanine to produce 8-amino-7-oxononanoate (AON), [acyl-carrier protein], and carbon dioxide. The chain is Putative 8-amino-7-oxononanoate synthase 2 (bioF) from Bacillus velezensis (strain DSM 23117 / BGSC 10A6 / LMG 26770 / FZB42) (Bacillus amyloliquefaciens subsp. plantarum).